A 352-amino-acid chain; its full sequence is N-terminal EF-hand calcium-binding protein 1 (352 aa).

At S4 the chain carries Phosphoserine. EF-hand domains are found at residues 26-61 and 60-95; these read KGMSIFLDILRRADKNDDGKLSFEEFKAYFADGVLS and LSGEELHELFHTIDTHNTNNLDTEELCEYFSQHLGE. D39, N41, D43, K45, and E50 together coordinate Ca(2+). Positions 135–163 form a coiled coil; sequence LLKETLNQLQSLQNSLECAMETTEEQTRQ. Positions 155-202 are disordered; sequence ETTEEQTRQERQGPSKPEVLSIQWPGKRSSRRVQRHNSFSPNSPQFNV. Over residues 190–202 the composition is skewed to polar residues; that stretch reads HNSFSPNSPQFNV. Phosphoserine is present on residues S192 and S197. A coiled-coil region spans residues 209–275; it reads EEDNQWMTQI…EEFQLALKHY (67 aa). The region spanning 252 to 340 is the ABM domain; it reads MLVQRQMSVT…LETPELTSTM (89 aa).

As to quaternary structure, interacts with STX1. May interact with CPNE6.

It is found in the cytoplasm. This chain is N-terminal EF-hand calcium-binding protein 1 (Necab1), found in Rattus norvegicus (Rat).